Here is a 1035-residue protein sequence, read N- to C-terminus: Sulfite reductase [NADPH] flavoprotein component (1035 aa).

An FAD-binding FR-type domain is found at 648 to 879; sequence VKNFVVKVKE…VKPSVMKLPP (232 aa). Residues 684-695 and 814-824 contribute to the FAD site; these read YDIGEALGIHAR and LKRREYSIASS.

Requires FAD as cofactor. FMN is required as a cofactor.

The enzyme catalyses hydrogen sulfide + 3 NADP(+) + 3 H2O = sulfite + 3 NADPH + 4 H(+). Its pathway is sulfur metabolism; hydrogen sulfide biosynthesis; hydrogen sulfide from sulfite (NADPH route): step 1/1. In terms of biological role, this enzyme catalyzes the 6-electron reduction of sulfite to sulfide. This is one of several activities required for the biosynthesis of L-cysteine from sulfate. In Saccharomyces cerevisiae (strain ATCC 204508 / S288c) (Baker's yeast), this protein is Sulfite reductase [NADPH] flavoprotein component (MET10).